The following is a 451-amino-acid chain: tRNA modification GTPase MnmE (451 aa).

The (6S)-5-formyl-5,6,7,8-tetrahydrofolate site is built by arginine 23, glutamate 80, and lysine 119. In terms of domain architecture, TrmE-type G spans glycine 215–glycine 372. A K(+)-binding site is contributed by asparagine 225. GTP is bound by residues asparagine 225–serine 230, threonine 244–threonine 250, and aspartate 269–glycine 272. Residue serine 229 participates in Mg(2+) binding. K(+) contacts are provided by threonine 244, isoleucine 246, and threonine 249. Residue threonine 250 coordinates Mg(2+). Lysine 451 contributes to the (6S)-5-formyl-5,6,7,8-tetrahydrofolate binding site.

This sequence belongs to the TRAFAC class TrmE-Era-EngA-EngB-Septin-like GTPase superfamily. TrmE GTPase family. Homodimer. Heterotetramer of two MnmE and two MnmG subunits. The cofactor is K(+).

The protein resides in the cytoplasm. Functionally, exhibits a very high intrinsic GTPase hydrolysis rate. Involved in the addition of a carboxymethylaminomethyl (cmnm) group at the wobble position (U34) of certain tRNAs, forming tRNA-cmnm(5)s(2)U34. The chain is tRNA modification GTPase MnmE from Nitrosomonas europaea (strain ATCC 19718 / CIP 103999 / KCTC 2705 / NBRC 14298).